The chain runs to 43 residues: Protein PsbN (43 aa).

The helical transmembrane segment at 5 to 27 threads the bilayer; it reads TFITIFISCLLVSVTGYALYTAF.

It belongs to the PsbN family.

It localises to the plastid. The protein localises to the chloroplast thylakoid membrane. In terms of biological role, may play a role in photosystem I and II biogenesis. This chain is Protein PsbN, found in Chara vulgaris (Common stonewort).